The primary structure comprises 891 residues: DNA mismatch repair protein MutS (891 aa).

ATP is bound at residue 634–641 (GPNMGGKS).

Belongs to the DNA mismatch repair MutS family.

Its function is as follows. This protein is involved in the repair of mismatches in DNA. It is possible that it carries out the mismatch recognition step. This protein has a weak ATPase activity. This chain is DNA mismatch repair protein MutS, found in Burkholderia pseudomallei (strain 668).